We begin with the raw amino-acid sequence, 96 residues long: Small ribosomal subunit protein bS20 (96 aa).

This sequence belongs to the bacterial ribosomal protein bS20 family.

In terms of biological role, binds directly to 16S ribosomal RNA. This Anaplasma phagocytophilum (strain HZ) protein is Small ribosomal subunit protein bS20.